The sequence spans 324 residues: Probable UDP-sugar transporter protein SLC35A4 (324 aa).

The Cytoplasmic portion of the chain corresponds to 1 to 18 (MSVEDGGVPGLARPRQAR). Residues 19–39 (WTLLLFLSTAMYGAHAPFLAL) form a helical membrane-spanning segment. The Lumenal portion of the chain corresponds to 40-52 (CHVDGRVPFRPSS). Residues 53-73 (AVLLTELTKLLLCAFSLLVGW) form a helical membrane-spanning segment. At 74–85 (QTWPQGTPPWRQ) the chain is on the cytoplasmic side. The chain crosses the membrane as a helical span at residues 86–106 (AVPFALSALLYGANNNLVIYL). The Lumenal portion of the chain corresponds to 107-142 (QRYMDPSTYQVLSNLKIGSTALLYCLCLGHRLSARQ). Residues 143–163 (GLALLLLMAAGACYASGGFQE) form a helical membrane-spanning segment. The Cytoplasmic portion of the chain corresponds to 164–180 (PVNTLPGPASAAGAHPM). The chain crosses the membrane as a helical span at residues 181 to 201 (PLHITPLGLLLLILYCLISGL). Over 202-214 (SSVYTELIMKRQR) the chain is Lumenal. Residues 215–235 (LPLALQNLFLYTFGVILNFGL) form a helical membrane-spanning segment. At 236 to 248 (YAGSGPGPGFLEG) the chain is on the cytoplasmic side. The chain crosses the membrane as a helical span at residues 249–271 (FSGWAVLVVLNQAVNGLLMSAVM). Residues 272–279 (KHGSSITR) lie on the Lumenal side of the membrane. Residues 280–300 (LFIVSCSLVVNAVLSAVLLQL) traverse the membrane as a helical segment. The Cytoplasmic portion of the chain corresponds to 301 to 324 (QLTAIFFLAALLIGLAVCLYYGSP).

The protein belongs to the nucleotide-sugar transporter family. SLC35A subfamily. In terms of assembly, found in a complex with SLC35A2 and SLC35A3.

The protein resides in the golgi apparatus membrane. The enzyme catalyses CDP-L-ribitol(in) + CDP(out) = CDP-L-ribitol(out) + CDP(in). Functionally, mediates the transport of CDP-ribitol. Does not exhibit CMP-sialic acid, UDP-galactose and UDP-N-acetylglucosamine transport activity. This Mus musculus (Mouse) protein is Probable UDP-sugar transporter protein SLC35A4.